The sequence spans 197 residues: Glycerol-3-phosphate acyltransferase (197 aa).

Helical transmembrane passes span 5–25 (LILI…VGKI), 70–90 (LPVL…AVIG), 111–131 (VMLF…FIVL), and 153–173 (IFFT…AFIF).

The protein belongs to the PlsY family. Probably interacts with PlsX.

The protein localises to the cell membrane. It catalyses the reaction an acyl phosphate + sn-glycerol 3-phosphate = a 1-acyl-sn-glycero-3-phosphate + phosphate. The protein operates within lipid metabolism; phospholipid metabolism. Its function is as follows. Catalyzes the transfer of an acyl group from acyl-phosphate (acyl-PO(4)) to glycerol-3-phosphate (G3P) to form lysophosphatidic acid (LPA). This enzyme utilizes acyl-phosphate as fatty acyl donor, but not acyl-CoA or acyl-ACP. The sequence is that of Glycerol-3-phosphate acyltransferase from Geobacillus sp. (strain WCH70).